Here is a 164-residue protein sequence, read N- to C-terminus: Protein-export protein SecB (164 aa).

The span at 1-12 shows a compositional bias: basic and acidic residues; it reads MPDKDEITHDAQ. The segment at 1-22 is disordered; that stretch reads MPDKDEITHDAQSENEESLPLA.

This sequence belongs to the SecB family. In terms of assembly, homotetramer, a dimer of dimers. One homotetramer interacts with 1 SecA dimer.

It localises to the cytoplasm. In terms of biological role, one of the proteins required for the normal export of preproteins out of the cell cytoplasm. It is a molecular chaperone that binds to a subset of precursor proteins, maintaining them in a translocation-competent state. It also specifically binds to its receptor SecA. This Neorickettsia sennetsu (strain ATCC VR-367 / Miyayama) (Ehrlichia sennetsu) protein is Protein-export protein SecB.